Consider the following 338-residue polypeptide: Limbic system-associated membrane protein (338 aa).

The N-terminal stretch at 1–28 is a signal peptide; sequence MVGRVQPDRKQLPLVLLRLLCLLPTGLP. Ig-like C2-type domains follow at residues 29–122, 132–214, and 219–304; these read VRSV…PKTS, PKIS…VKVT, and PTIT…ASLV. N-linked (GlcNAc...) asparagine glycosylation is found at Asn-40 and Asn-66. The cysteines at positions 53 and 111 are disulfide-linked. Tyr-94 carries the phosphotyrosine modification. N-linked (GlcNAc...) asparagine glycosylation is found at Asn-136 and Asn-148. 2 disulfides stabilise this stretch: Cys-153-Cys-197 and Cys-239-Cys-290. N-linked (GlcNAc...) asparagine glycans are attached at residues Asn-279, Asn-287, and Asn-300. Residue Asn-315 is the site of GPI-anchor amidated asparagine; alternate attachment. Asn-315 carries N-linked (GlcNAc...) asparagine; alternate glycosylation. Positions 316–338 are cleaved as a propeptide — removed in mature form; the sequence is GSISLAVPLWLLAASLFCLLSKC.

The protein belongs to the immunoglobulin superfamily. IgLON family. In terms of tissue distribution, expressed mostly by neurons comprising limbic-associated cortical and subcortical regions that function in cognition, emotion, memory, and learning.

It is found in the cell membrane. In terms of biological role, mediates selective neuronal growth and axon targeting. Contributes to the guidance of developing axons and remodeling of mature circuits in the limbic system. Essential for normal growth of the hippocampal mossy fiber projection. The sequence is that of Limbic system-associated membrane protein (Lsamp) from Rattus norvegicus (Rat).